We begin with the raw amino-acid sequence, 464 residues long: Cysteine--tRNA ligase 1 (464 aa).

Zn(2+) is bound at residue Cys28. Residues Val30–His40 carry the 'HIGH' region motif. The Zn(2+) site is built by Cys209, His234, and Glu238. The 'KMSKS' region signature appears at Lys266–Ser270. Lys269 is a binding site for ATP.

It belongs to the class-I aminoacyl-tRNA synthetase family. As to quaternary structure, monomer. Zn(2+) serves as cofactor.

Its subcellular location is the cytoplasm. The catalysed reaction is tRNA(Cys) + L-cysteine + ATP = L-cysteinyl-tRNA(Cys) + AMP + diphosphate. This Photobacterium profundum (strain SS9) protein is Cysteine--tRNA ligase 1.